A 132-amino-acid polypeptide reads, in one-letter code: Small ribosomal subunit protein uS11 (132 aa).

Positions 1 to 24 (MAAPKQAARKPRRRDRKSVPVGQA) are disordered. Residues 7–16 (AARKPRRRDR) are compositionally biased toward basic residues.

Belongs to the universal ribosomal protein uS11 family. In terms of assembly, part of the 30S ribosomal subunit. Interacts with proteins S7 and S18. Binds to IF-3.

Located on the platform of the 30S subunit, it bridges several disparate RNA helices of the 16S rRNA. Forms part of the Shine-Dalgarno cleft in the 70S ribosome. This is Small ribosomal subunit protein uS11 from Bifidobacterium longum (strain DJO10A).